The primary structure comprises 940 residues: Isoleucine--tRNA ligase (940 aa).

A 'HIGH' region motif is present at residues 58-68; it reads PYANGDIHIGH. Glu-564 is a binding site for L-isoleucyl-5'-AMP. A 'KMSKS' region motif is present at residues 605 to 609; it reads KMSKS. Residue Lys-608 coordinates ATP. 4 residues coordinate Zn(2+): Cys-903, Cys-906, Cys-923, and Cys-926.

It belongs to the class-I aminoacyl-tRNA synthetase family. IleS type 1 subfamily. Monomer. The cofactor is Zn(2+).

The protein localises to the cytoplasm. It carries out the reaction tRNA(Ile) + L-isoleucine + ATP = L-isoleucyl-tRNA(Ile) + AMP + diphosphate. In terms of biological role, catalyzes the attachment of isoleucine to tRNA(Ile). As IleRS can inadvertently accommodate and process structurally similar amino acids such as valine, to avoid such errors it has two additional distinct tRNA(Ile)-dependent editing activities. One activity is designated as 'pretransfer' editing and involves the hydrolysis of activated Val-AMP. The other activity is designated 'posttransfer' editing and involves deacylation of mischarged Val-tRNA(Ile). In Shewanella pealeana (strain ATCC 700345 / ANG-SQ1), this protein is Isoleucine--tRNA ligase.